The primary structure comprises 129 residues: Mini-ribonuclease 3-like protein (129 aa).

Residue D23 is part of the active site.

It belongs to the MrnC RNase family.

Its function is as follows. Might be a ribonuclease involved in RNA processing. The protein is Mini-ribonuclease 3-like protein (mrnCL) of Fusobacterium nucleatum subsp. nucleatum (strain ATCC 25586 / DSM 15643 / BCRC 10681 / CIP 101130 / JCM 8532 / KCTC 2640 / LMG 13131 / VPI 4355).